A 335-amino-acid chain; its full sequence is Fructose-1,6-bisphosphatase class 1 (335 aa).

Mg(2+) is bound by residues Glu-93, Asp-117, Leu-119, and Asp-120. Residues 120–123 (DGSS), Asn-213, Tyr-244, and Lys-274 each bind substrate. Glu-280 contacts Mg(2+).

The protein belongs to the FBPase class 1 family. As to quaternary structure, homotetramer. Mg(2+) serves as cofactor.

It localises to the cytoplasm. The catalysed reaction is beta-D-fructose 1,6-bisphosphate + H2O = beta-D-fructose 6-phosphate + phosphate. It participates in carbohydrate biosynthesis; gluconeogenesis. The protein is Fructose-1,6-bisphosphatase class 1 of Flavobacterium psychrophilum (strain ATCC 49511 / DSM 21280 / CIP 103535 / JIP02/86).